The chain runs to 147 residues: Fibromodulin (147 aa).

LRR repeat units follow at residues 1–15 (LDHN…PLPR), 16–37 (SLRE…ALEG), 40–61 (NLTA…MRGL), 63–84 (SLIL…LPSA), 85–105 (LEQL…YFRG), and 108–128 (KLLY…ASNT). Asn-5 is a glycosylation site (N-linked (GlcNAc...) (keratan sulfate) asparagine). A glycan (N-linked (GlcNAc...) (keratan sulfate) asparagine) is linked at Asn-40. A glycan (N-linked (GlcNAc...) (keratan sulfate) asparagine) is linked at Asn-130. Residues 133–147 (SLLELDLSYNQLQKI) form an LRR 7 repeat.

The protein belongs to the small leucine-rich proteoglycan (SLRP) family. SLRP class II subfamily. As to quaternary structure, binds to type I and type II collagen. Binds keratan sulfate chains.

Its subcellular location is the secreted. It localises to the extracellular space. The protein localises to the extracellular matrix. In terms of biological role, affects the rate of fibrils formation. May have a primary role in collagen fibrillogenesis. This chain is Fibromodulin (FMOD), found in Sus scrofa (Pig).